The following is a 242-amino-acid chain: Type III pantothenate kinase (242 aa).

7 to 14 (DLGNSRFK) contributes to the ATP binding site. Substrate-binding positions include Tyr-91 and 98 to 101 (GVDR). Catalysis depends on Asp-100, which acts as the Proton acceptor. Thr-121 is a binding site for ATP. Substrate is bound at residue Thr-171.

It belongs to the type III pantothenate kinase family. As to quaternary structure, homodimer. It depends on NH4(+) as a cofactor. Requires K(+) as cofactor.

The protein resides in the cytoplasm. The enzyme catalyses (R)-pantothenate + ATP = (R)-4'-phosphopantothenate + ADP + H(+). Its pathway is cofactor biosynthesis; coenzyme A biosynthesis; CoA from (R)-pantothenate: step 1/5. In terms of biological role, catalyzes the phosphorylation of pantothenate (Pan), the first step in CoA biosynthesis. The polypeptide is Type III pantothenate kinase (Xanthomonas euvesicatoria pv. vesicatoria (strain 85-10) (Xanthomonas campestris pv. vesicatoria)).